The primary structure comprises 49 residues: Large ribosomal subunit protein bL33A (49 aa).

The protein belongs to the bacterial ribosomal protein bL33 family.

In Streptococcus pneumoniae (strain Hungary19A-6), this protein is Large ribosomal subunit protein bL33A.